Reading from the N-terminus, the 381-residue chain is L-lactate dehydrogenase (381 aa).

One can recognise an FMN hydroxy acid dehydrogenase domain in the interval 1 to 380; that stretch reads MIISASTDYR…SADSLVRELG (380 aa). Y24 contributes to the substrate binding site. FMN contacts are provided by S106 and Q127. Y129 lines the substrate pocket. Residue T155 coordinates FMN. R164 is a substrate binding site. Residue K251 coordinates FMN. The active-site Proton acceptor is H275. R278 contacts substrate. 306–330 is a binding site for FMN; that stretch reads DSGIRTGLDVVRMIALGADSVLLGR.

This sequence belongs to the FMN-dependent alpha-hydroxy acid dehydrogenase family. Homotetramer. FMN serves as cofactor.

The protein localises to the cell inner membrane. The enzyme catalyses (S)-lactate + A = pyruvate + AH2. Its function is as follows. Catalyzes the conversion of L-lactate to pyruvate. Is coupled to the respiratory chain. The sequence is that of L-lactate dehydrogenase from Pseudomonas aeruginosa (strain LESB58).